The sequence spans 344 residues: Unsaturated rhamnogalacturonyl hydrolase YesR (344 aa).

Residues 30-31, asparagine 74, and 118-128 each bind substrate; these read DW and QHTVNAAEYVF. The active-site Proton donor is aspartate 135. Substrate contacts are provided by residues 198-202 and 308-309; these read RANGW and NA.

This sequence belongs to the glycosyl hydrolase 105 family. As to quaternary structure, monomer.

Its subcellular location is the cytoplasm. It carries out the reaction 2-O-(4-deoxy-beta-L-threo-hex-4-enopyranuronosyl)-alpha-L-rhamnose + H2O = 5-dehydro-4-deoxy-D-glucuronate + L-rhamnopyranose. In terms of biological role, catalyzes the hydrolysis of unsaturated rhamnogalacturonan disaccharide to yield unsaturated D-galacturonic acid and L-rhamnose. It cannot act on unsaturated glucuronyl hydrolase (UGL) substrates containing unsaturated D-glucuronic acid at the non-reducing terminus, although the active pockets of YesR and UGL are very similar. This chain is Unsaturated rhamnogalacturonyl hydrolase YesR (yesR), found in Bacillus subtilis (strain 168).